Reading from the N-terminus, the 114-residue chain is T cell receptor beta variable 6-1 (114 aa).

The first 21 residues, 1–21 (MSIGLLCCVAFSLLWASPVNA), serve as a signal peptide directing secretion. Residues 22–114 (GVTQTPKFQV…TSVYFCASSE (93 aa)) enclose the Ig-like domain. A disulfide bridge connects residues Cys42 and Cys110. Asn84 carries N-linked (GlcNAc...) asparagine glycosylation.

As to quaternary structure, alpha-beta TR is a heterodimer composed of an alpha and beta chain; disulfide-linked. The alpha-beta TR is associated with the transmembrane signaling CD3 coreceptor proteins to form the TR-CD3 (TcR or TCR). The assembly of alpha-beta TR heterodimers with CD3 occurs in the endoplasmic reticulum where a single alpha-beta TR heterodimer associates with one CD3D-CD3E heterodimer, one CD3G-CD3E heterodimer and one CD247 homodimer forming a stable octameric structure. CD3D-CD3E and CD3G-CD3E heterodimers preferentially associate with TR alpha and TR beta chains, respectively. The association of the CD247 homodimer is the last step of TcR assembly in the endoplasmic reticulum and is required for transport to the cell surface.

Its subcellular location is the cell membrane. In terms of biological role, v region of the variable domain of T cell receptor (TR) beta chain that participates in the antigen recognition. Alpha-beta T cell receptors are antigen specific receptors which are essential to the immune response and are present on the cell surface of T lymphocytes. Recognize peptide-major histocompatibility (MH) (pMH) complexes that are displayed by antigen presenting cells (APC), a prerequisite for efficient T cell adaptive immunity against pathogens. Binding of alpha-beta TR to pMH complex initiates TR-CD3 clustering on the cell surface and intracellular activation of LCK that phosphorylates the ITAM motifs of CD3G, CD3D, CD3E and CD247 enabling the recruitment of ZAP70. In turn ZAP70 phosphorylates LAT, which recruits numerous signaling molecules to form the LAT signalosome. The LAT signalosome propagates signal branching to three major signaling pathways, the calcium, the mitogen-activated protein kinase (MAPK) kinase and the nuclear factor NF-kappa-B (NF-kB) pathways, leading to the mobilization of transcription factors that are critical for gene expression and essential for T cell growth and differentiation. The T cell repertoire is generated in the thymus, by V-(D)-J rearrangement. This repertoire is then shaped by intrathymic selection events to generate a peripheral T cell pool of self-MH restricted, non-autoaggressive T cells. Post-thymic interaction of alpha-beta TR with the pMH complexes shapes TR structural and functional avidity. In Homo sapiens (Human), this protein is T cell receptor beta variable 6-1.